Consider the following 31-residue polypeptide: Cyclotide cter-J (31 aa).

Residues Gly1–Asp31 constitute a cross-link (cyclopeptide (Gly-Asp)). 3 disulfides stabilise this stretch: Cys5-Cys21, Cys9-Cys23, and Cys14-Cys28.

Contains 3 disulfide bonds. In terms of processing, this is a cyclic peptide.

Functionally, probably participates in a plant defense mechanism. This is Cyclotide cter-J from Clitoria ternatea (Butterfly pea).